Consider the following 217-residue polypeptide: LexA repressor (217 aa).

Positions 28-48 (RAEIAAEFGFSSPNAAEEHLR) form a DNA-binding region, H-T-H motif. Residues serine 136 and lysine 173 each act as for autocatalytic cleavage activity in the active site.

It belongs to the peptidase S24 family. In terms of assembly, homodimer.

It catalyses the reaction Hydrolysis of Ala-|-Gly bond in repressor LexA.. In terms of biological role, represses a number of genes involved in the response to DNA damage (SOS response), including recA and lexA. In the presence of single-stranded DNA, RecA interacts with LexA causing an autocatalytic cleavage which disrupts the DNA-binding part of LexA, leading to derepression of the SOS regulon and eventually DNA repair. This is LexA repressor from Cupriavidus necator (strain ATCC 17699 / DSM 428 / KCTC 22496 / NCIMB 10442 / H16 / Stanier 337) (Ralstonia eutropha).